The primary structure comprises 1396 residues: ATP-dependent helicase/nuclease subunit A (1396 aa).

A disordered region spans residues 1 to 25; that stretch reads MNREALCHDDPIGHDRLRPDSIPRD. The region spanning 26 to 532 is the UvrD-like helicase ATP-binding domain; the sequence is PKWTDEQWQA…IDLAKNFRSR (507 aa). Residue 47–54 coordinates ATP; it reads AAAGAGKT. Disordered stretches follow at residues 590–649 and 1171–1205; these read DADG…GQPT and HSPE…PSPD. In terms of domain architecture, UvrD-like helicase C-terminal spans 615–920; sequence HKNIAKAGES…RIMSIHKSKG (306 aa). Low complexity predominate over residues 1181 to 1199; it reads TPPSLEIPPSLETPPSLET.

Belongs to the helicase family. AddA subfamily. As to quaternary structure, heterodimer of AddA and AddB/RexB. Mg(2+) serves as cofactor.

It catalyses the reaction Couples ATP hydrolysis with the unwinding of duplex DNA by translocating in the 3'-5' direction.. The enzyme catalyses ATP + H2O = ADP + phosphate + H(+). The heterodimer acts as both an ATP-dependent DNA helicase and an ATP-dependent, dual-direction single-stranded exonuclease. Recognizes the chi site generating a DNA molecule suitable for the initiation of homologous recombination. The AddA nuclease domain is required for chi fragment generation; this subunit has the helicase and 3' -&gt; 5' nuclease activities. The sequence is that of ATP-dependent helicase/nuclease subunit A from Heliobacterium modesticaldum (strain ATCC 51547 / Ice1).